The sequence spans 398 residues: Phytoene synthase, chloroplastic (398 aa).

The protein belongs to the phytoene/squalene synthase family. As to quaternary structure, monomer.

The protein localises to the plastid. It localises to the chloroplast. The catalysed reaction is 2 (2E,6E,10E)-geranylgeranyl diphosphate = 15-cis-phytoene + 2 diphosphate. The protein operates within carotenoid biosynthesis; phytoene biosynthesis; all-trans-phytoene from geranylgeranyl diphosphate: step 1/1. Catalyzes the reaction from prephytoene diphosphate to phytoene. This chain is Phytoene synthase, chloroplastic (PSY), found in Daucus carota (Wild carrot).